The following is a 331-amino-acid chain: Undecaprenyl-phosphate 4-deoxy-4-formamido-L-arabinose transferase (331 aa).

Helical transmembrane passes span 236–256 and 270–290; these read LSIV…FLIL and VFPL…GLGL.

Belongs to the glycosyltransferase 2 family.

Its subcellular location is the cell inner membrane. It catalyses the reaction UDP-4-deoxy-4-formamido-beta-L-arabinose + di-trans,octa-cis-undecaprenyl phosphate = 4-deoxy-4-formamido-alpha-L-arabinopyranosyl di-trans,octa-cis-undecaprenyl phosphate + UDP. The protein operates within glycolipid biosynthesis; 4-amino-4-deoxy-alpha-L-arabinose undecaprenyl phosphate biosynthesis; 4-amino-4-deoxy-alpha-L-arabinose undecaprenyl phosphate from UDP-4-deoxy-4-formamido-beta-L-arabinose and undecaprenyl phosphate: step 1/2. It participates in bacterial outer membrane biogenesis; lipopolysaccharide biosynthesis. Its function is as follows. Catalyzes the transfer of 4-deoxy-4-formamido-L-arabinose from UDP to undecaprenyl phosphate. The modified arabinose is attached to lipid A and is required for resistance to polymyxin and cationic antimicrobial peptides. In Shewanella sediminis (strain HAW-EB3), this protein is Undecaprenyl-phosphate 4-deoxy-4-formamido-L-arabinose transferase.